Reading from the N-terminus, the 170-residue chain is Interferon gamma (170 aa).

Positions 1 to 20 (MNSRLCIMALLLCFSQALLG) are cleaved as a signal peptide. Residues asparagine 36 and asparagine 103 are each glycosylated (N-linked (GlcNAc...) asparagine).

It belongs to the type II (or gamma) interferon family. In terms of assembly, homodimer. Interacts with IFNGR1 (via extracellular domain); this interaction promotes IFNGR1 dimerization. Released primarily from activated T lymphocytes.

Its subcellular location is the secreted. In terms of biological role, type II interferon produced by immune cells such as T-cells and NK cells that plays crucial roles in antimicrobial, antiviral, and antitumor responses by activating effector immune cells and enhancing antigen presentation. Primarily signals through the JAK-STAT pathway after interaction with its receptor IFNGR1 to affect gene regulation. Upon IFNG binding, IFNGR1 intracellular domain opens out to allow association of downstream signaling components JAK2, JAK1 and STAT1, leading to STAT1 activation, nuclear translocation and transcription of IFNG-regulated genes. Many of the induced genes are transcription factors such as IRF1 that are able to further drive regulation of a next wave of transcription. Plays a role in class I antigen presentation pathway by inducing a replacement of catalytic proteasome subunits with immunoproteasome subunits. In turn, increases the quantity, quality, and repertoire of peptides for class I MHC loading. Increases the efficiency of peptide generation also by inducing the expression of activator PA28 that associates with the proteasome and alters its proteolytic cleavage preference. Up-regulates as well MHC II complexes on the cell surface by promoting expression of several key molecules such as cathepsins B/CTSB, H/CTSH, and L/CTSL. Participates in the regulation of hematopoietic stem cells during development and under homeostatic conditions by affecting their development, quiescence, and differentiation. This Sigmodon hispidus (Hispid cotton rat) protein is Interferon gamma (IFNG).